The sequence spans 328 residues: D-cysteine desulfhydrase (328 aa).

Position 51 is an N6-(pyridoxal phosphate)lysine (Lys51).

The protein belongs to the ACC deaminase/D-cysteine desulfhydrase family. As to quaternary structure, homodimer. Pyridoxal 5'-phosphate serves as cofactor.

It carries out the reaction D-cysteine + H2O = hydrogen sulfide + pyruvate + NH4(+) + H(+). Catalyzes the alpha,beta-elimination reaction of D-cysteine and of several D-cysteine derivatives. It could be a defense mechanism against D-cysteine. The protein is D-cysteine desulfhydrase of Salmonella typhimurium (strain LT2 / SGSC1412 / ATCC 700720).